Consider the following 588-residue polypeptide: Schlafen family member 12-like (588 aa).

The chain crosses the membrane as a helical span at residues 566–586 (IFLFVCLFRFCLFVCWFVCFF).

This sequence belongs to the Schlafen family.

It is found in the membrane. The chain is Schlafen family member 12-like (SLFN12L) from Homo sapiens (Human).